Reading from the N-terminus, the 151-residue chain is Ubiquitin-conjugating enzyme E2 2 (151 aa).

A disordered region spans residues 1 to 26; the sequence is MSTTARRRLMRDFKRMQQDPPQGVSA. Positions 4 to 150 constitute a UBC core domain; sequence TARRRLMRDF…VRDTVEASWT (147 aa). Cysteine 88 (glycyl thioester intermediate) is an active-site residue.

The protein belongs to the ubiquitin-conjugating enzyme family.

The protein resides in the cytoplasm. The protein localises to the nucleus. The catalysed reaction is S-ubiquitinyl-[E1 ubiquitin-activating enzyme]-L-cysteine + [E2 ubiquitin-conjugating enzyme]-L-cysteine = [E1 ubiquitin-activating enzyme]-L-cysteine + S-ubiquitinyl-[E2 ubiquitin-conjugating enzyme]-L-cysteine.. Its pathway is protein modification; protein ubiquitination. Functionally, catalyzes the covalent attachment of ubiquitin to other proteins. Plays a role in transcription regulation by catalyzing the monoubiquitination of histone H2B to form H2BK123ub1. H2BK123ub1 gives a specific tag for epigenetic transcriptional activation and is also a prerequisite for H3K4me and H3K79me formation. Also involved in postreplication repair of UV-damaged DNA, in N-end rule-dependent protein degradation and in sporulation. In Yarrowia lipolytica (strain CLIB 122 / E 150) (Yeast), this protein is Ubiquitin-conjugating enzyme E2 2 (UBC2).